Consider the following 261-residue polypeptide: Glucosamine-6-phosphate deaminase (261 aa).

Residue D67 is the Proton acceptor; for enolization step of the active site. The For ring-opening step role is filled by N136. H138 serves as the catalytic Proton acceptor; for ring-opening step. Catalysis depends on E143, which acts as the For ring-opening step.

The protein belongs to the glucosamine/galactosamine-6-phosphate isomerase family. NagB subfamily.

The enzyme catalyses alpha-D-glucosamine 6-phosphate + H2O = beta-D-fructose 6-phosphate + NH4(+). It participates in amino-sugar metabolism; N-acetylneuraminate degradation; D-fructose 6-phosphate from N-acetylneuraminate: step 5/5. In terms of biological role, catalyzes the reversible isomerization-deamination of glucosamine 6-phosphate (GlcN6P) to form fructose 6-phosphate (Fru6P) and ammonium ion. The chain is Glucosamine-6-phosphate deaminase from Cutibacterium acnes (strain DSM 16379 / KPA171202) (Propionibacterium acnes).